The primary structure comprises 340 residues: Guanine nucleotide-binding protein G(I)/G(S)/G(T) subunit beta-1 (340 aa).

WD repeat units lie at residues 53 to 83 (GHLA…IIWD), 95 to 125 (LRSS…PIYN), 141 to 170 (GHTG…ALWD), 182 to 212 (GHTG…KLWD), 224 to 254 (GHES…RLFD), 268 to 298 (NIIC…NVWD), and 310 to 340 (GHDN…KIWN).

Belongs to the WD repeat G protein beta family. In terms of assembly, g proteins are composed of 3 units, alpha, beta and gamma.

Guanine nucleotide-binding proteins (G proteins) are involved as a modulator or transducer in various transmembrane signaling systems. The beta and gamma chains are required for the GTPase activity, for replacement of GDP by GTP, and for G protein-effector interaction. In Xenopus laevis (African clawed frog), this protein is Guanine nucleotide-binding protein G(I)/G(S)/G(T) subunit beta-1 (gnb1).